The chain runs to 79 residues: Small ribosomal subunit protein bS18 (79 aa).

This sequence belongs to the bacterial ribosomal protein bS18 family. In terms of assembly, part of the 30S ribosomal subunit. Forms a tight heterodimer with protein bS6.

Binds as a heterodimer with protein bS6 to the central domain of the 16S rRNA, where it helps stabilize the platform of the 30S subunit. The sequence is that of Small ribosomal subunit protein bS18 from Streptococcus pneumoniae (strain Hungary19A-6).